The primary structure comprises 666 residues: DNA ligase (666 aa).

Residues Asp-34–Asp-38, Ser-83–Leu-84, and Glu-114 each bind NAD(+). The active-site N6-AMP-lysine intermediate is the Lys-116. NAD(+) contacts are provided by Arg-137, Glu-171, Lys-286, and Lys-310. Residues Cys-404, Cys-407, Cys-422, and Cys-427 each coordinate Zn(2+). In terms of domain architecture, BRCT spans Asn-588–Glu-666.

This sequence belongs to the NAD-dependent DNA ligase family. LigA subfamily. Mg(2+) serves as cofactor. Mn(2+) is required as a cofactor.

The catalysed reaction is NAD(+) + (deoxyribonucleotide)n-3'-hydroxyl + 5'-phospho-(deoxyribonucleotide)m = (deoxyribonucleotide)n+m + AMP + beta-nicotinamide D-nucleotide.. Its function is as follows. DNA ligase that catalyzes the formation of phosphodiester linkages between 5'-phosphoryl and 3'-hydroxyl groups in double-stranded DNA using NAD as a coenzyme and as the energy source for the reaction. It is essential for DNA replication and repair of damaged DNA. The sequence is that of DNA ligase from Mesoplasma florum (strain ATCC 33453 / NBRC 100688 / NCTC 11704 / L1) (Acholeplasma florum).